Here is a 491-residue protein sequence, read N- to C-terminus: MNTQQLAKLRSIVPEMRRVRHIHFVGIGGAGMGGIAEVLANEGYQISGSDLAPNPVTQQLTSLGATIFFNHRPENVRDASVVVVSSAISADNPEIVAAHEARIPVIRRAEMLAELMRFRHGIAIAGTHGKTTTTAMVSSIYAEAGLDPTFVNGGLVKAAGVHARLGHSRYLIAEADESDASFLHLQPMVAIVTNIEADHMDTYHGDFENLKQTFINFLHNLPFYGRAVMCVDDPVIRELLPRVGRQTTTYGFSEDADVRVEDYQQIGPQGHFTLLRQGMPDLHVTLNAPGRHNALNAAAAVAVATEEGIDDDAILRALESFQGTGRRFDFLGEFPLEPVNGKAGTAMLVDDYGHHPTEVDATIKAARAGWPDKNLVMLFQPHRYTRTRDLYDDFANVLTQVDALLMLDVYPAGEAPIPGADSRSLCRTIRNRGKIDPILVSDPAQVATMLAPVLTGNDLILVQGAGNVGKIARYLSEIKLKPQIQEEEQHG.

Glycine 126–threonine 132 lines the ATP pocket.

Belongs to the MurCDEF family.

The protein localises to the cytoplasm. The enzyme catalyses UDP-N-acetyl-alpha-D-muramate + L-alanine + ATP = UDP-N-acetyl-alpha-D-muramoyl-L-alanine + ADP + phosphate + H(+). The protein operates within cell wall biogenesis; peptidoglycan biosynthesis. Functionally, cell wall formation. This Salmonella agona (strain SL483) protein is UDP-N-acetylmuramate--L-alanine ligase.